Consider the following 154-residue polypeptide: Putative pre-16S rRNA nuclease (154 aa).

Belongs to the YqgF nuclease family.

It localises to the cytoplasm. Could be a nuclease involved in processing of the 5'-end of pre-16S rRNA. The polypeptide is Putative pre-16S rRNA nuclease (Rickettsia canadensis (strain McKiel)).